The primary structure comprises 293 residues: Epidermal growth factor-like protein 8 (293 aa).

The first 28 residues, 1 to 28 (MGLWAELCISLRGLSFFLVLMTGEGTRG), serve as a signal peptide directing secretion. Positions 34–112 (SLGVCSKQTL…PHPGALTCDA (79 aa)) constitute an EMI domain. Disulfide bonds link Cys-38–Cys-97, Cys-65–Cys-71, Cys-96–Cys-110, Cys-114–Cys-124, Cys-118–Cys-130, Cys-132–Cys-141, Cys-148–Cys-159, Cys-155–Cys-168, and Cys-170–Cys-183. Asn-50 carries N-linked (GlcNAc...) asparagine glycosylation. In terms of domain architecture, EGF-like 1 spans 111–142 (DAICSKPCLNGGVCTGPDRCECAPGWGGKHCH). Positions 144 to 184 (DVDECRASLTLCSHGCLNTLGSFLCSCPHPLVLGLDGRTCA) constitute an EGF-like 2; calcium-binding domain. Positions 206–235 (SEEERALRWEVAELRGRLEKLEQWATQAGA) form a coiled coil.

As to expression, ubiquitously expressed in brain, kidney, thymus and lung.

Its subcellular location is the secreted. The polypeptide is Epidermal growth factor-like protein 8 (Egfl8) (Mus musculus (Mouse)).